The primary structure comprises 167 residues: Probable glutathione peroxidase 8 (167 aa).

Residue Cys-41 is part of the active site.

Belongs to the glutathione peroxidase family.

The catalysed reaction is 2 glutathione + H2O2 = glutathione disulfide + 2 H2O. May constitute a glutathione peroxidase-like protective system against oxidative stresses. This chain is Probable glutathione peroxidase 8 (GPX8), found in Arabidopsis thaliana (Mouse-ear cress).